Consider the following 58-residue polypeptide: Large ribosomal subunit protein bL32 (58 aa).

This sequence belongs to the bacterial ribosomal protein bL32 family.

The polypeptide is Large ribosomal subunit protein bL32 (Prochlorococcus marinus (strain MIT 9515)).